The chain runs to 924 residues: Protein translocase subunit SecA (924 aa).

Residues Q87, 105-109, and D517 each bind ATP; that span reads GEGKT. The tract at residues 886-906 is disordered; it reads VPAADRDPNDPSTWGKVGRNE. Zn(2+) is bound by residues C908, C910, C919, and H920.

The protein belongs to the SecA family. Monomer and homodimer. Part of the essential Sec protein translocation apparatus which comprises SecA, SecYEG and auxiliary proteins SecDF-YajC and YidC. Zn(2+) serves as cofactor.

Its subcellular location is the cell inner membrane. It is found in the cytoplasm. It carries out the reaction ATP + H2O + cellular proteinSide 1 = ADP + phosphate + cellular proteinSide 2.. In terms of biological role, part of the Sec protein translocase complex. Interacts with the SecYEG preprotein conducting channel. Has a central role in coupling the hydrolysis of ATP to the transfer of proteins into and across the cell membrane, serving both as a receptor for the preprotein-SecB complex and as an ATP-driven molecular motor driving the stepwise translocation of polypeptide chains across the membrane. In Azorhizobium caulinodans (strain ATCC 43989 / DSM 5975 / JCM 20966 / LMG 6465 / NBRC 14845 / NCIMB 13405 / ORS 571), this protein is Protein translocase subunit SecA.